The primary structure comprises 376 residues: MTISKFVQIRRDLHQIPELGFQEWKTQQYILNYIETLPNEHIEVKTWKTGVIVKVKGKNPVKTIGYRADMDGLPIVEETGYEFASTHEGMMHACGHDFHTTIGLGLLTATVNDRIDDDLVFLFQPAEEGPGGALPMLESEELKEWKPNMILGLHIAPEYPVGTIATKEGLLFANTSELYIDLKGKGGHAAYPHMANDMIVAASHLVTQLQSVISRNVNPLDSAVITIGKITGGTVQNIIAEKSRLEGTIRTLSVESMKRVKDRIEAIVAGIEAAFQCEAVIDYGAMYHQVYNHEALTKEFMEFASKDTNMNVVTCKEAMTGEDFGYMLRDIPGFMFWLGVDSEYGLHHAKLKPNEAAIDRAIEFLNQYVKWKGNRR.

The active site involves Asp-69. Glu-128 serves as the catalytic Proton acceptor.

It belongs to the peptidase M20A family. N-acetyldiaminopimelate deacetylase subfamily.

It catalyses the reaction N-acetyl-(2S,6S)-2,6-diaminopimelate + H2O = (2S,6S)-2,6-diaminopimelate + acetate. Its pathway is amino-acid biosynthesis; L-lysine biosynthesis via DAP pathway; LL-2,6-diaminopimelate from (S)-tetrahydrodipicolinate (acetylase route): step 3/3. Catalyzes the conversion of N-acetyl-diaminopimelate to diaminopimelate and acetate. The protein is N-acetyldiaminopimelate deacetylase of Bacillus cytotoxicus (strain DSM 22905 / CIP 110041 / 391-98 / NVH 391-98).